The sequence spans 41 residues: Plantazolicin (41 aa).

Residues 1-27 (MTQIKVPTALIASVHGEGQHLFEPMAA) constitute a propeptide that is removed on maturation. Arginine 28 is subject to N2,N2-dimethylarginine. The segment at residues 28–29 (RC) is a cross-link (thiazole-4-carboxylic acid (Arg-Cys)). Cross-links (5-methyloxazole-4-carboxylic acid (Cys-Thr)) lie at residues 29–30 (CT) and 31–32 (CT). Residues 30–31 (TC) constitute a cross-link (thiazole-4-carboxylic acid (Thr-Cys)). Positions 32–33 (TT) form a cross-link, 5-methyloxazole-4-carboxylic acid (Thr-Thr). Residues 35 to 36 (IS) constitute a cross-link (oxazole-4-carboxylic acid (Ile-Ser)). 3 cross-links (oxazole-4-carboxylic acid (Ser-Ser)) span residues 36–37 (SS), 37–38 (SS), and 38–39 (SS). The 5-methyloxazoline-4-carboxylic acid (Ser-Thr) cross-link spans 39-40 (ST).

Maturation of thiazole and oxazole containing antibiotics involves the enzymatic condensation of a Cys, Ser or Thr with the alpha-carbonyl of the preceding amino acid to form a thioether or ether bond, then dehydration to form a double bond with the alpha-amino nitrogen. Thiazoline or oxazoline ring are dehydrogenated to form thiazole or oxazole rings. In terms of processing, 2 forms exist: plantazolicin A and plantazolicin B. The structural difference between them is a dimethylation at Arg-28 in plantazolicin A.

It localises to the secreted. The protein resides in the cell wall. Functionally, peptide antibiotic inhibiting growth of Gram-positive bacteria in the dimethylated form plantazolicin A. The desmethyl form plantazolicin B has no antibiotic activity. The mode of action appears to be disruption of cell walls and lysis of cells. Inhibits B.subtilis strain HB0042, B.megaterium strain 7A1 and B.anthracis (MIC=2-4 ug/ml). Weakly inhibits Gram-positive bacteria B.brevis strain ATCC 8246, B.subtilis strain 168, B.cereus strain ATCC 14579 and strain CU1065, B.licheniformis strain ATCC 9789, M.luteus, B.sphaericus, P.granivorans and S.pyogenes (MIC=128 ug/ml). Does not inhibit B.pumilus, P.polymyxa, Arthrobacter sp., S.aureus, vancomycin-resistant E.faecalis, L.monocytogenes, methicillin-resistant S.aureus or Gram-negative bacteria E.coli strain K12, K.terrigena, Pseudomonas sp. and E.carotovora. The sequence is that of Plantazolicin from Bacillus velezensis (strain DSM 23117 / BGSC 10A6 / LMG 26770 / FZB42) (Bacillus amyloliquefaciens subsp. plantarum).